We begin with the raw amino-acid sequence, 76 residues long: MLKVAKISVSCIVLVLCIYSLFNQNELLLIVVQLFVAALLSLVGVEAILSKQKLSEYLLFGSAAFLLVVNGVKFII.

Transmembrane regions (helical) follow at residues 2 to 22 (LKVA…YSLF), 28 to 48 (LLIV…VEAI), and 56 to 76 (EYLL…KFII).

It is found in the cell membrane. This is an uncharacterized protein from Bacillus subtilis (strain 168).